Consider the following 155-residue polypeptide: Putative pre-16S rRNA nuclease (155 aa).

Belongs to the YqgF nuclease family.

The protein resides in the cytoplasm. In terms of biological role, could be a nuclease involved in processing of the 5'-end of pre-16S rRNA. This Corynebacterium jeikeium (strain K411) protein is Putative pre-16S rRNA nuclease.